Reading from the N-terminus, the 454-residue chain is Replicative DNA helicase DnaB (454 aa).

Residues 1-149 (MSELFSERIP…LDEADRKIME (149 aa)) form an N-terminal domain (NTD) region. Residues 163-176 (KDILVQTYDNIEML) are linker helix. In terms of domain architecture, SF4 helicase spans 179–445 (RDGEITGIPT…NKFVNLERRF (267 aa)). Residues 183–454 (ITGIPTGFTE…FDEAQIPPGA (272 aa)) form a C-terminal domain (CTD) region. S213, G215, K216, T217, and A218 together coordinate ATP. Catalysis depends on E241, which acts as the Nucleophile. 2 residues coordinate ATP: R250 and Q362. R381, E382, and G384 together coordinate ssDNA. ATP contacts are provided by K418, Q419, and R420.

The protein belongs to the helicase family. DnaB subfamily. As to quaternary structure, homohexamer. Interacts with DnaG primase, as DnaB(6):DnaG(3). Interacts with the N-terminus of DnaI (shown with DnaI of B.subtilis), forms a helicase DnaB(6):DnaI(6) complex. The DnaB-DnaI complex is disrupted by DnaD (DnaD and DnaI from B.subtilis). A stable complex DnaI(6):DnaB(6):DnaG(3) fragment can be isolated; DnaI and DnaG do not contact each other (DnaI in this complex is derived from B.subtilis). Forms a complex with DNA clamp loader protein tau (shown with B.subtilis HolA) tau(3):DnaB(6); a single ATP hydrolysis even is sufficient for complex formation.

The catalysed reaction is Couples ATP hydrolysis with the unwinding of duplex DNA at the replication fork by translocating in the 5'-3' direction. This creates two antiparallel DNA single strands (ssDNA). The leading ssDNA polymer is the template for DNA polymerase III holoenzyme which synthesizes a continuous strand.. It carries out the reaction ATP + H2O = ADP + phosphate + H(+). Its function is as follows. The main replicative DNA helicase, it participates in initiation and elongation during chromosome replication. Travels ahead of the DNA replisome, separating double-stranded (ds)DNA into templates for DNA synthesis. Binding of single-stranded (ss)DNA to the hexamer suggests a 2-nucleotide step size for the helicase and a hand-over-hand mechanism of DNA unwinding. Has ssDNA-stimulated ATPase activity. DnaG primase stimulates the helicase activity (the helicase direction was not determine but is probably 5'-3'). Loaded onto DNA by helicase loader DnaI (shown with DnaI of B.subtilis); ATP-binding enhances loading and subsequent ATP hydrolysis dissociates the complex, leaving helicase on the DNA. Binds ssDNA and less well dsDNA, in the presence of ADPNP (probably 5'-adenylyl beta, gamma-imidodiphosphate, but not ATP) binding to both DNAs is improved. The polypeptide is Replicative DNA helicase DnaB (Geobacillus stearothermophilus (Bacillus stearothermophilus)).